The chain runs to 264 residues: MSVVSLPQLLEAGVHFGHKASRWNPKMRPYIFTERNGIHIIDLVQTARYLNEAYEYVRDAADRGWRFLFVGTKRQAAGIIAQEARRCGSYYVNQRWLGGMLTNWATIKTRIDRLKEIEEMESSGLLDRLPKQEASRLRRELARLEKYLGGIKTMRKLPDAVIIVDQRREANAVQECIKLNIPIISLLDTNCDPDLSDIFIPSNDDAIRAIKLIVGKLADAIYEGRHGQLDTVEEDEYDYEGAMDLDDDILEDMEDEEEGEAEEG.

It belongs to the universal ribosomal protein uS2 family.

In Synechococcus sp. (strain JA-2-3B'a(2-13)) (Cyanobacteria bacterium Yellowstone B-Prime), this protein is Small ribosomal subunit protein uS2.